The following is a 131-amino-acid chain: uncharacterized protein (131 aa).

The interval 112 to 131 is disordered; the sequence is LTDNPGAVRKSQKSLIPPYN.

This is an uncharacterized protein from Fowl adenovirus A serotype 1 (strain CELO / Phelps) (FAdV-1).